We begin with the raw amino-acid sequence, 161 residues long: Allophycocyanin beta chain (161 aa).

The residue at position 71 (Asn71) is an N4-methylasparagine. A (2R,3E)-phycocyanobilin-binding site is contributed by Cys81.

It belongs to the phycobiliprotein family. Heterodimer of an alpha and a beta chain. Post-translationally, contains one covalently linked phycocyanobilin chromophore.

Its subcellular location is the cellular thylakoid membrane. Functionally, light-harvesting photosynthetic bile pigment-protein from the phycobiliprotein complex. Allophycocyanin has a maximum absorption at approximately 650 nanometers. The sequence is that of Allophycocyanin beta chain (apcB) from Thermosynechococcus vestitus (strain NIES-2133 / IAM M-273 / BP-1).